The primary structure comprises 221 residues: MPDSPFGDWDGTPAGARLLQQELAGRVVLRDDFPDLGLIAGVDVGFEEGGGITRAAAVLLDANTLGVLAESLVRIPTSMPYIPGLLSFRELPAVLRALAELPRVPDLVFCDGQGIAHPRRLGIAAHLGVVSGLPTIGVAKKILVGTHAELGSHRGDQVPLMYRGEVLGAVLRSKDRVRPLIVSPGHRVSLASAPRLVMACVTRYRLPEPTRLADRLASRRA.

Residues D43 and D111 each coordinate Mg(2+).

The protein belongs to the endonuclease V family. It depends on Mg(2+) as a cofactor.

The protein resides in the cytoplasm. The enzyme catalyses Endonucleolytic cleavage at apurinic or apyrimidinic sites to products with a 5'-phosphate.. Functionally, DNA repair enzyme involved in the repair of deaminated bases. Selectively cleaves double-stranded DNA at the second phosphodiester bond 3' to a deoxyinosine leaving behind the intact lesion on the nicked DNA. This Azotobacter vinelandii (strain DJ / ATCC BAA-1303) protein is Endonuclease V.